A 197-amino-acid polypeptide reads, in one-letter code: Lactoylglutathione lyase-like protein terB (197 aa).

Residues 1–19 (MARFAVLQLLLPLAAGLTG) form the signal peptide. N-linked (GlcNAc...) asparagine glycans are attached at residues N82, N99, and N140.

The protein belongs to the glyoxalase I family.

In terms of biological role, lactoylglutathione lyase-like protein; part of the gene cluster that mediates the biosynthesis of terrein, a fungal metabolite with ecological, antimicrobial, antiproliferative, and antioxidative activities. The first step in the pathway is performed by the polyketide synthase terA that produces 4-hydroxy-6-methylpyranon (4-HMP), orsellinic acid (OA), and 2,3-dehydro-6-hydroxymellein (2,3-dehydro-6-HM) by condensing acetyl-CoA with two, three, or four malonyl-CoA units, respectively. 4-HMP and OA are not pathway intermediates, but are rather shunt or side products. 2,3-dehydro-6-HM is further converted to 6-hydroxymellein (6-HM) by the 6-hydroxymellein synthase terB. The monooxygenases terC and terD, the multicopper oxidase terE and the Kelch-like protein terF are then involved in the transformation of 6-HM to terrein. Even if they are co-regulated with the other terrein cluster genes, terH and terI seem to be dispensable for terrein production; whereas one or both of the 2 transporters terG and terJ are probably required for efficient secretion of metabolites. The sequence is that of Lactoylglutathione lyase-like protein terB from Aspergillus terreus (strain NIH 2624 / FGSC A1156).